We begin with the raw amino-acid sequence, 427 residues long: Glutamate-1-semialdehyde 2,1-aminomutase (427 aa).

Position 265 is an N6-(pyridoxal phosphate)lysine (Lys-265).

It belongs to the class-III pyridoxal-phosphate-dependent aminotransferase family. HemL subfamily. Homodimer. It depends on pyridoxal 5'-phosphate as a cofactor.

The protein localises to the cytoplasm. It carries out the reaction (S)-4-amino-5-oxopentanoate = 5-aminolevulinate. The protein operates within porphyrin-containing compound metabolism; protoporphyrin-IX biosynthesis; 5-aminolevulinate from L-glutamyl-tRNA(Glu): step 2/2. This is Glutamate-1-semialdehyde 2,1-aminomutase from Pseudomonas fluorescens (strain Pf0-1).